A 648-amino-acid polypeptide reads, in one-letter code: Chaperone protein HtpG (648 aa).

Residues 1 to 353 form an a; substrate-binding region; sequence MNARVEQLEF…AQDMSLNVSR (353 aa). Positions 354–567 are b; the sequence is EILQQDRQIK…TFGITPALAR (214 aa). Positions 568–648 are c; the sequence is IYRATGQDVP…LLADRLTRTL (81 aa).

The protein belongs to the heat shock protein 90 family. Homodimer.

It localises to the cytoplasm. Functionally, molecular chaperone. Has ATPase activity. This chain is Chaperone protein HtpG, found in Mycobacterium ulcerans (strain Agy99).